Consider the following 36-residue polypeptide: Esculentin-2R (36 aa).

An intrachain disulfide couples cysteine 30 to cysteine 36.

In terms of tissue distribution, expressed by the skin glands.

The protein localises to the secreted. Its function is as follows. Antimicrobial peptide. The polypeptide is Esculentin-2R (Pelophylax ridibundus (Marsh frog)).